The chain runs to 457 residues: Mesentericin Y105 secretion protein MesE (457 aa).

A helical transmembrane segment spans residues 22–42 (TLIIVPIFLLVVFIVLFSLFA).

The protein belongs to the membrane fusion protein (MFP) (TC 8.A.1) family.

It is found in the membrane. Involved in the secretion of mesentericin Y105. In Leuconostoc mesenteroides, this protein is Mesentericin Y105 secretion protein MesE (mesE).